Reading from the N-terminus, the 465-residue chain is ATP synthase subunit beta (465 aa).

Residue 155-162 coordinates ATP; the sequence is GGAGVGKT.

The protein belongs to the ATPase alpha/beta chains family. In terms of assembly, F-type ATPases have 2 components, CF(1) - the catalytic core - and CF(0) - the membrane proton channel. CF(1) has five subunits: alpha(3), beta(3), gamma(1), delta(1), epsilon(1). CF(0) has three main subunits: a(1), b(2) and c(9-12). The alpha and beta chains form an alternating ring which encloses part of the gamma chain. CF(1) is attached to CF(0) by a central stalk formed by the gamma and epsilon chains, while a peripheral stalk is formed by the delta and b chains.

It is found in the cell membrane. The catalysed reaction is ATP + H2O + 4 H(+)(in) = ADP + phosphate + 5 H(+)(out). Its function is as follows. Produces ATP from ADP in the presence of a proton gradient across the membrane. The catalytic sites are hosted primarily by the beta subunits. The polypeptide is ATP synthase subunit beta (Buchnera aphidicola subsp. Baizongia pistaciae (strain Bp)).